The primary structure comprises 201 residues: Peptidyl-tRNA hydrolase (201 aa).

Tyr14 is a binding site for tRNA. His19 functions as the Proton acceptor in the catalytic mechanism. 3 residues coordinate tRNA: Tyr64, Asn66, and Asn113. Residues 178–201 (PGPAMNRFNRKPEPPESGGEVAAK) form a disordered region.

It belongs to the PTH family. In terms of assembly, monomer.

It is found in the cytoplasm. It carries out the reaction an N-acyl-L-alpha-aminoacyl-tRNA + H2O = an N-acyl-L-amino acid + a tRNA + H(+). In terms of biological role, hydrolyzes ribosome-free peptidyl-tRNAs (with 1 or more amino acids incorporated), which drop off the ribosome during protein synthesis, or as a result of ribosome stalling. Functionally, catalyzes the release of premature peptidyl moieties from peptidyl-tRNA molecules trapped in stalled 50S ribosomal subunits, and thus maintains levels of free tRNAs and 50S ribosomes. In Koribacter versatilis (strain Ellin345), this protein is Peptidyl-tRNA hydrolase.